The primary structure comprises 393 residues: Formate-dependent phosphoribosylglycinamide formyltransferase (393 aa).

Residues 22–23 and E82 each bind N(1)-(5-phospho-beta-D-ribosyl)glycinamide; that span reads EL. ATP contacts are provided by residues R114, K155, 160–165, 195–198, and E203; these read SSGKGQ and EGFI. The region spanning 119-308 is the ATP-grasp domain; sequence RLAAEELDLP…QFALHARAIL (190 aa). The Mg(2+) site is built by E267 and E279. Residues D286, K356, and 363–364 contribute to the N(1)-(5-phospho-beta-D-ribosyl)glycinamide site; that span reads RR.

It belongs to the PurK/PurT family. As to quaternary structure, homodimer.

It carries out the reaction N(1)-(5-phospho-beta-D-ribosyl)glycinamide + formate + ATP = N(2)-formyl-N(1)-(5-phospho-beta-D-ribosyl)glycinamide + ADP + phosphate + H(+). The protein operates within purine metabolism; IMP biosynthesis via de novo pathway; N(2)-formyl-N(1)-(5-phospho-D-ribosyl)glycinamide from N(1)-(5-phospho-D-ribosyl)glycinamide (formate route): step 1/1. Functionally, involved in the de novo purine biosynthesis. Catalyzes the transfer of formate to 5-phospho-ribosyl-glycinamide (GAR), producing 5-phospho-ribosyl-N-formylglycinamide (FGAR). Formate is provided by PurU via hydrolysis of 10-formyl-tetrahydrofolate. In Pseudomonas entomophila (strain L48), this protein is Formate-dependent phosphoribosylglycinamide formyltransferase.